The chain runs to 210 residues: N-(5'-phosphoribosyl)anthranilate isomerase (210 aa).

The protein belongs to the TrpF family.

It carries out the reaction N-(5-phospho-beta-D-ribosyl)anthranilate = 1-(2-carboxyphenylamino)-1-deoxy-D-ribulose 5-phosphate. Its pathway is amino-acid biosynthesis; L-tryptophan biosynthesis; L-tryptophan from chorismate: step 3/5. The polypeptide is N-(5'-phosphoribosyl)anthranilate isomerase (Staphylococcus aureus (strain Mu3 / ATCC 700698)).